Consider the following 101-residue polypeptide: Iron-sulfur cluster assembly protein CyaY (101 aa).

It belongs to the frataxin family.

Involved in iron-sulfur (Fe-S) cluster assembly. May act as a regulator of Fe-S biogenesis. The protein is Iron-sulfur cluster assembly protein CyaY of Actinobacillus pleuropneumoniae serotype 7 (strain AP76).